Here is a 213-residue protein sequence, read N- to C-terminus: Large ribosomal subunit protein uL1 (213 aa).

Belongs to the universal ribosomal protein uL1 family. Part of the 50S ribosomal subunit.

Its function is as follows. Binds directly to 23S rRNA. Probably involved in E site tRNA release. Functionally, protein L1 is also a translational repressor protein, it controls the translation of its operon by binding to its mRNA. The sequence is that of Large ribosomal subunit protein uL1 from Methanosarcina mazei (strain ATCC BAA-159 / DSM 3647 / Goe1 / Go1 / JCM 11833 / OCM 88) (Methanosarcina frisia).